A 199-amino-acid polypeptide reads, in one-letter code: Putative rhomboid protease YdcA (199 aa).

The next 6 helical transmembrane spans lie at Leu-14 to Leu-34, Ile-65 to Ala-85, Phe-97 to Pro-117, His-122 to Phe-142, Ile-147 to Phe-167, and Ile-172 to Val-192. Ser-126 serves as the catalytic Nucleophile. The active-site Charge relay system is His-177.

This sequence belongs to the peptidase S54 family.

It is found in the cell membrane. This is Putative rhomboid protease YdcA (ydcA) from Bacillus subtilis (strain 168).